Consider the following 450-residue polypeptide: Glucose-6-phosphate isomerase (450 aa).

E290 (proton donor) is an active-site residue. Catalysis depends on residues H311 and K425.

Belongs to the GPI family.

Its subcellular location is the cytoplasm. It catalyses the reaction alpha-D-glucose 6-phosphate = beta-D-fructose 6-phosphate. It participates in carbohydrate biosynthesis; gluconeogenesis. Its pathway is carbohydrate degradation; glycolysis; D-glyceraldehyde 3-phosphate and glycerone phosphate from D-glucose: step 2/4. Its function is as follows. Catalyzes the reversible isomerization of glucose-6-phosphate to fructose-6-phosphate. The polypeptide is Glucose-6-phosphate isomerase (Alkaliphilus metalliredigens (strain QYMF)).